The sequence spans 170 residues: MQPTAIDSKSKSHPNERVAFIQACWHKDIVDQSRKGFVAEMAKQGYAESDIDIFEVGGAFEIPLHAKLLANTGRYAGIVGAALVVDGGIYRHEFVAQSVVSALMQVQLETEVPVFSVVLTPHHFHAGEEHQKFFFDHFSHKGEEAAKTCADTLNKVRSLRRLDAQQKAAC.

Residues Trp-25, 59–61, and 83–85 contribute to the 5-amino-6-(D-ribitylamino)uracil site; these read AFE and LVV. Residue Arg-91 is the Proton donor of the active site. Position 116 (Ser-116) interacts with 5-amino-6-(D-ribitylamino)uracil. Residue His-130 coordinates (2S)-2-hydroxy-3-oxobutyl phosphate.

Belongs to the DMRL synthase family. As to quaternary structure, forms an icosahedral capsid composed of 60 subunits, arranged as a dodecamer of pentamers.

It catalyses the reaction (2S)-2-hydroxy-3-oxobutyl phosphate + 5-amino-6-(D-ribitylamino)uracil = 6,7-dimethyl-8-(1-D-ribityl)lumazine + phosphate + 2 H2O + H(+). Its pathway is cofactor biosynthesis; riboflavin biosynthesis; riboflavin from 2-hydroxy-3-oxobutyl phosphate and 5-amino-6-(D-ribitylamino)uracil: step 1/2. In terms of biological role, catalyzes the formation of 6,7-dimethyl-8-ribityllumazine by condensation of 5-amino-6-(D-ribitylamino)uracil with 3,4-dihydroxy-2-butanone 4-phosphate. This is the penultimate step in the biosynthesis of riboflavin. The polypeptide is 6,7-dimethyl-8-ribityllumazine synthase 2 (Pseudomonas syringae pv. tomato (strain ATCC BAA-871 / DC3000)).